The sequence spans 1205 residues: A disintegrin and metalloproteinase with thrombospondin motifs 2 (1205 aa).

Positions 1-28 (MDPPAGAAGRLLCPALLLLLLLPLPADA) are cleaved as a signal peptide. Residues 29–253 (RLAAAAADPP…VNSSRRRMRR (225 aa)) constitute a propeptide that is removed on maturation. Residues N104 and N245 are each glycosylated (N-linked (GlcNAc...) asparagine). The Peptidase M12B domain maps to 260–464 (YNIEVLLGVD…HSYDCLRDDP (205 aa)). Disulfide bonds link C337/C386, C380/C459, C419/C445, C486/C511, C497/C520, C506/C539, C533/C544, C567/C604, C571/C609, and C582/C594. Residue H402 participates in Zn(2+) binding. The active site involves E403. Zn(2+) contacts are provided by H406 and H412. The region spanning 474–554 (QLPGLHYSMN…IWLTPDILKR (81 aa)) is the Disintegrin domain. A TSP type-1 1 domain is found at 555–610 (DGNWGAWSPFGSCSRTCGTGVKFRTRQCDNPHPANGGRTCSGLAYDFQLCNSQDCP). The short motif at 685–687 (RGD) is the Cell attachment site element. A spacer region spans residues 717-845 (KVVKGTFSRS…NVDDNNVLED (129 aa)). TSP type-1 domains are found at residues 848-906 (VGYE…NPQE), 908-968 (SQPV…NREL), and 969-1023 (CPGR…GPCP). Residues N942, N943, and N987 are each glycosylated (N-linked (GlcNAc...) asparagine). 3 disulfides stabilise this stretch: C981–C1017, C985–C1022, and C996–C1006. An N-linked (GlcNAc...) asparagine glycan is attached at N1025. The 39-residue stretch at 1053-1091 (SKGRCQGDKSVFCRMEVLSRYCSIPGYNKLCCKSCNPHD) folds into the PLAC domain. 3 N-linked (GlcNAc...) asparagine glycosylation sites follow: N1092, N1139, and N1144. The tract at residues 1163–1184 (GLEDEVQPPNLIPRRPSPYEKT) is disordered.

May belong to a multimeric complex. Binds specifically to collagen type XIV. Zn(2+) serves as cofactor. The N-terminus is blocked. In terms of processing, the precursor is cleaved by a furin endopeptidase. Post-translationally, glycosylated. Can be O-fucosylated by POFUT2 on a serine or a threonine residue found within the consensus sequence C1-X(2)-(S/T)-C2-G of the TSP type-1 repeat domains where C1 and C2 are the first and second cysteine residue of the repeat, respectively. Fucosylated repeats can then be further glycosylated by the addition of a beta-1,3-glucose residue by the glucosyltransferase, B3GALTL. Fucosylation mediates the efficient secretion of ADAMTS family members. Can also be C-glycosylated with one or two mannose molecules on tryptophan residues within the consensus sequence W-X-X-W of the TPRs, and N-glycosylated. These other glycosylations can also facilitate secretion. As to expression, enzymatic activity is detected at high level in all type I collagen-rich tissues such as skin, bones, tendons and aorta and at low level in brain and thymus. The mRNA levels were disproportionately high in heart, liver, retina and muscle.

The protein localises to the secreted. Its subcellular location is the extracellular space. It is found in the extracellular matrix. It carries out the reaction Cleaves the N-propeptide of collagen chain alpha1(I) at Pro-|-Gln and of alpha1(II) and alpha2(I) at Ala-|-Gln.. Its function is as follows. Cleaves the propeptides of type I and II collagen prior to fibril assembly. Does not act on type III collagen. Cleaves lysyl oxidase LOX at a site downstream of its propeptide cleavage site to produce a short LOX form with reduced collagen-binding activity. This Bos taurus (Bovine) protein is A disintegrin and metalloproteinase with thrombospondin motifs 2 (ADAMTS2).